The sequence spans 313 residues: Glyoxylate/hydroxypyruvate reductase A (313 aa).

The active site involves Arg228. The Proton donor role is filled by His276.

The protein belongs to the D-isomer specific 2-hydroxyacid dehydrogenase family. GhrA subfamily.

Its subcellular location is the cytoplasm. The catalysed reaction is glycolate + NADP(+) = glyoxylate + NADPH + H(+). It carries out the reaction (R)-glycerate + NAD(+) = 3-hydroxypyruvate + NADH + H(+). It catalyses the reaction (R)-glycerate + NADP(+) = 3-hydroxypyruvate + NADPH + H(+). In terms of biological role, catalyzes the NADPH-dependent reduction of glyoxylate and hydroxypyruvate into glycolate and glycerate, respectively. The protein is Glyoxylate/hydroxypyruvate reductase A of Photorhabdus laumondii subsp. laumondii (strain DSM 15139 / CIP 105565 / TT01) (Photorhabdus luminescens subsp. laumondii).